The primary structure comprises 423 residues: UPF0229 protein PSEEN0423 (423 aa).

A disordered region spans residues 85–107; the sequence is GEHIARPQGGGGGGGRGKAGNSG. A compositionally biased stretch (gly residues) spans 92–107; the sequence is QGGGGGGGRGKAGNSG.

The protein belongs to the UPF0229 family.

In Pseudomonas entomophila (strain L48), this protein is UPF0229 protein PSEEN0423.